Consider the following 235-residue polypeptide: Aspartate/glutamate leucyltransferase (235 aa).

Belongs to the R-transferase family. Bpt subfamily.

It is found in the cytoplasm. The enzyme catalyses N-terminal L-glutamyl-[protein] + L-leucyl-tRNA(Leu) = N-terminal L-leucyl-L-glutamyl-[protein] + tRNA(Leu) + H(+). It carries out the reaction N-terminal L-aspartyl-[protein] + L-leucyl-tRNA(Leu) = N-terminal L-leucyl-L-aspartyl-[protein] + tRNA(Leu) + H(+). In terms of biological role, functions in the N-end rule pathway of protein degradation where it conjugates Leu from its aminoacyl-tRNA to the N-termini of proteins containing an N-terminal aspartate or glutamate. In Pseudomonas putida (strain W619), this protein is Aspartate/glutamate leucyltransferase.